Reading from the N-terminus, the 371-residue chain is Protein STRICTOSIDINE SYNTHASE-LIKE 6 (371 aa).

A signal peptide spans 1–21; it reads MPVFLSSRFLFFCIIVPLLIS. 2 N-linked (GlcNAc...) asparagine glycosylation sites follow: Asn-101 and Asn-137. The residue at position 303 (Tyr-303) is a Phosphotyrosine.

Belongs to the strictosidine synthase family.

It is found in the vacuole. The polypeptide is Protein STRICTOSIDINE SYNTHASE-LIKE 6 (Arabidopsis thaliana (Mouse-ear cress)).